The sequence spans 208 residues: Small ribosomal subunit protein uS4 (208 aa).

The 64-residue stretch at 98–161 (RRLDNVVYRL…KASPRIKELV (64 aa)) folds into the S4 RNA-binding domain.

This sequence belongs to the universal ribosomal protein uS4 family. Part of the 30S ribosomal subunit. Contacts protein S5. The interaction surface between S4 and S5 is involved in control of translational fidelity.

In terms of biological role, one of the primary rRNA binding proteins, it binds directly to 16S rRNA where it nucleates assembly of the body of the 30S subunit. Its function is as follows. With S5 and S12 plays an important role in translational accuracy. This Desulforamulus reducens (strain ATCC BAA-1160 / DSM 100696 / MI-1) (Desulfotomaculum reducens) protein is Small ribosomal subunit protein uS4.